The following is a 249-amino-acid chain: Probable transcriptional regulatory protein ACIAD2052 (249 aa).

The protein belongs to the TACO1 family.

It is found in the cytoplasm. The protein is Probable transcriptional regulatory protein ACIAD2052 of Acinetobacter baylyi (strain ATCC 33305 / BD413 / ADP1).